The chain runs to 467 residues: Dynactin subunit 4 (467 aa).

At Ala-2 the chain carries N-acetylalanine. Residues 152–172 (QQLAQKEKVERDRKKLARRRN) are a coiled coil. The residue at position 203 (Ser-203) is a Phosphoserine. Residue Lys-222 forms a Glycyl lysine isopeptide (Lys-Gly) (interchain with G-Cter in SUMO2) linkage. Residue Thr-414 is modified to Phosphothreonine.

It belongs to the dynactin subunit 4 family. As to quaternary structure, subunit of dynactin, a multiprotein complex part of a tripartite complex with dynein and a adapter, such as BICDL1, BICD2 or HOOK3. The dynactin complex is built around ACTR1A/ACTB filament and consists of an actin-related filament composed of a shoulder domain, a pointed end and a barbed end. Its length is defined by its flexible shoulder domain. The soulder is composed of 2 DCTN1 subunits, 4 DCTN2 and 2 DCTN3. The 4 DCNT2 (via N-terminus) bind the ACTR1A filament and act as molecular rulers to determine the length. The pointed end is important for binding dynein-dynactin cargo adapters. Consists of 4 subunits: ACTR10, DCNT4, DCTN5 and DCTN6. The barbed end is composed of a CAPZA1:CAPZB heterodimers, which binds ACTR1A/ACTB filament and dynactin and stabilizes dynactin. Interacts with ATP7B, but not ATP7A, in a copper-dependent manner. Interacts with ANK2; this interaction is required for localization at costameres. Interacts with N4BP2L1.

It localises to the cytoplasm. The protein resides in the cytoskeleton. The protein localises to the microtubule organizing center. It is found in the centrosome. Its subcellular location is the stress fiber. It localises to the cell cortex. The protein resides in the myofibril. The protein localises to the sarcomere. In terms of biological role, part of the dynactin complex that activates the molecular motor dynein for ultra-processive transport along microtubules. This is Dynactin subunit 4 (Dctn4) from Mus musculus (Mouse).